Reading from the N-terminus, the 345-residue chain is Phosphoribosylformylglycinamidine cyclo-ligase (345 aa).

Belongs to the AIR synthase family.

The protein resides in the cytoplasm. The catalysed reaction is 2-formamido-N(1)-(5-O-phospho-beta-D-ribosyl)acetamidine + ATP = 5-amino-1-(5-phospho-beta-D-ribosyl)imidazole + ADP + phosphate + H(+). It functions in the pathway purine metabolism; IMP biosynthesis via de novo pathway; 5-amino-1-(5-phospho-D-ribosyl)imidazole from N(2)-formyl-N(1)-(5-phospho-D-ribosyl)glycinamide: step 2/2. The polypeptide is Phosphoribosylformylglycinamidine cyclo-ligase (Actinobacillus succinogenes (strain ATCC 55618 / DSM 22257 / CCUG 43843 / 130Z)).